A 318-amino-acid chain; its full sequence is Probable mitochondrial 2-oxoglutarate/malate carrier protein (318 aa).

Solcar repeat units lie at residues 22–111, 119–210, and 219–309; these read QSQL…IKDI, LPFT…TKQL, and DDIK…LNIL. 6 consecutive transmembrane segments (helical) span residues 28–48, 79–99, 125–145, 185–205, 225–245, and 281–301; these read FVIG…IDSL, GFFT…TYTT, IMVG…ADLT, GCSP…SSYD, LIAS…LDVI, and FYKG…LTFI.

Belongs to the mitochondrial carrier (TC 2.A.29) family.

The protein localises to the mitochondrion inner membrane. Its function is as follows. Mitochondrial solute carriers shuttle metabolites, nucleotides, and cofactors through the mitochondrial inner membrane. Catalyzes the transport of 2-oxoglutarate across the inner mitochondrial membrane in an electroneutral exchange for malate or other dicarboxylic acids, and plays an important role in several metabolic processes, including the malate-aspartate shuttle, the oxoglutarate/isocitrate shuttle, in gluconeogenesis from lactate, and in nitrogen metabolism. The sequence is that of Probable mitochondrial 2-oxoglutarate/malate carrier protein (ucpC) from Dictyostelium discoideum (Social amoeba).